Here is a 210-residue protein sequence, read N- to C-terminus: Protein MSO1 (210 aa).

M1 is subject to N-acetylmethionine. M2 carries the post-translational modification N-acetylserine. The interval 88-210 is disordered; that stretch reads KHDMKKQNSR…LKRRNNDYGF (123 aa). S102 carries the phosphoserine modification. The span at 117–141 shows a compositional bias: polar residues; it reads TPSSNGNTPEYTPASKSFQDIYNNH. Low complexity-rich tracts occupy residues 142-161 and 172-183; these read TSSS…RPSA and SKTSNSFNTSST.

In terms of assembly, interacts physically with SEC1.

In terms of biological role, involved in secretion. Component of the secretory vesicle docking complex. The chain is Protein MSO1 (MSO1) from Saccharomyces cerevisiae (strain ATCC 204508 / S288c) (Baker's yeast).